We begin with the raw amino-acid sequence, 25 residues long: C-type natriuretic peptide (25 aa).

An intrachain disulfide couples Cys-9 to Cys-25.

In terms of tissue distribution, venom gland.

It localises to the secreted. Snake venom natriuretic peptide that has a vasorelaxant activity in rat aortic strips and a diuretic potency in anesthetized rats. May act by activating natriuretic receptors (NPR1 and/or NPR2). The protein is C-type natriuretic peptide of Crotalus atrox (Western diamondback rattlesnake).